We begin with the raw amino-acid sequence, 749 residues long: ATP-dependent zinc metalloprotease FtsH 3 (749 aa).

Positions methionine 1–alanine 17 are enriched in basic and acidic residues. The interval methionine 1–phenylalanine 67 is disordered. Over methionine 1–glycine 75 the chain is Cytoplasmic. The chain crosses the membrane as a helical span at residues isoleucine 76 to alanine 96. Residues proline 97–serine 186 lie on the Extracellular side of the membrane. The chain crosses the membrane as a helical span at residues leucine 187–phenylalanine 207. Residues leucine 208–alanine 749 lie on the Cytoplasmic side of the membrane. Residue glycine 281–threonine 288 participates in ATP binding. Histidine 504 is a Zn(2+) binding site. Glutamate 505 is a catalytic residue. Zn(2+)-binding residues include histidine 508 and aspartate 580. Over residues glycine 679–glutamate 689 the composition is skewed to basic and acidic residues. A disordered region spans residues glycine 679–alanine 749.

It in the central section; belongs to the AAA ATPase family. The protein in the C-terminal section; belongs to the peptidase M41 family. As to quaternary structure, homohexamer. The cofactor is Zn(2+).

It localises to the cell membrane. Acts as a processive, ATP-dependent zinc metallopeptidase for both cytoplasmic and membrane proteins. Plays a role in the quality control of integral membrane proteins. This is ATP-dependent zinc metalloprotease FtsH 3 from Conexibacter woesei (strain DSM 14684 / CCUG 47730 / CIP 108061 / JCM 11494 / NBRC 100937 / ID131577).